The chain runs to 106 residues: Phosphoribosyl-ATP pyrophosphatase (106 aa).

It belongs to the PRA-PH family.

It is found in the cytoplasm. The catalysed reaction is 1-(5-phospho-beta-D-ribosyl)-ATP + H2O = 1-(5-phospho-beta-D-ribosyl)-5'-AMP + diphosphate + H(+). It participates in amino-acid biosynthesis; L-histidine biosynthesis; L-histidine from 5-phospho-alpha-D-ribose 1-diphosphate: step 2/9. The sequence is that of Phosphoribosyl-ATP pyrophosphatase from Geotalea daltonii (strain DSM 22248 / JCM 15807 / FRC-32) (Geobacter daltonii).